The following is a 142-amino-acid chain: Small ribosomal subunit protein bS6 (142 aa).

A disordered region spans residues 110–142 (NKKPSHAKEKHEKTEHAHSHHTEEAGSKESHSE).

This sequence belongs to the bacterial ribosomal protein bS6 family.

In terms of biological role, binds together with bS18 to 16S ribosomal RNA. The sequence is that of Small ribosomal subunit protein bS6 from Helicobacter acinonychis (strain Sheeba).